The chain runs to 325 residues: Diacylglycerol acyltransferase/mycolyltransferase Ag85B (325 aa).

A signal peptide spans methionine 1–alanine 40. Leucine 82–arginine 83 lines the substrate pocket. Positions phenylalanine 98 to isoleucine 108 are fibronectin-binding. A disulfide bond links cysteine 127 and cysteine 132. The substrate site is built by serine 166 and aspartate 194. The Nucleophile role is filled by serine 166. Glutamate 270 is an active-site residue. Substrate-binding positions include phenylalanine 272–serine 275, lysine 279, and histidine 302–tryptophan 304. The active site involves histidine 302.

Belongs to the mycobacterial A85 antigen family.

It is found in the secreted. The enzyme catalyses 2 alpha,alpha'-trehalose 6-mycolate = alpha,alpha'-trehalose 6,6'-bismycolate + alpha,alpha-trehalose. The catalysed reaction is an acyl-CoA + a 1,2-diacyl-sn-glycerol = a triacyl-sn-glycerol + CoA. The antigen 85 proteins (FbpA, FbpB, FbpC) are responsible for the high affinity of mycobacteria for fibronectin, a large adhesive glycoprotein, which facilitates the attachment of Mycobacteria to murine alveolar macrophages (AMs). They also help to maintain the integrity of the cell wall by catalyzing the transfer of mycolic acids to cell wall arabinogalactan and through the synthesis of alpha,alpha-trehalose dimycolate (TDM, cord factor). They catalyze the transfer of a mycoloyl residue from one molecule of alpha,alpha-trehalose monomycolate (TMM) to another TMM, leading to the formation of TDM. The protein is Diacylglycerol acyltransferase/mycolyltransferase Ag85B (fbpB) of Mycobacterium bovis (strain BCG / Pasteur 1173P2).